The sequence spans 464 residues: MTSYALLHTQRVTAKNGEVFTISPDLWERNQQQQSLLLRYFALPLKEENNRLWLGVDSLSNLSACETIAFITGKPVEPILLESSQLKELLQQLTPNQMQVEEQVKFYQHQETHFEQEDDEPVIRLLNQIFESALQKNASDIHLETLADQFQVRFRIDGVLQPQPLISKIFANRIISRLKLLAKLDISENRLPQDGRFQFKTTFSDILDFRLSTLPTHWGEKIVLRAQQNKPVELSFSELGMTENQQQAFQRVLSQPQGLILVTGPTGSGKSISLYTALQWLNTPDKHIMTAEDPIEIELDGIIQSQINPQIGLDFNRLLRTFLRQDPDIIMLGEIRDEESAMIALRAAQTGHLVLSTLHTNDAISAISRLQQLGIQQYEIKNSLLLVIAQRLVRKLCSKCGGNLANSCDCHQGYRGRIGVYQFLHWQQNDYQTDFKNLRASGLEKVSQGITDEKEIERVLGKNL.

G264–S271 serves as a coordination point for ATP.

This sequence belongs to the GSP E family.

This Haemophilus influenzae (strain ATCC 51907 / DSM 11121 / KW20 / Rd) protein is Protein transport protein HofB homolog (hofB).